The primary structure comprises 308 residues: Ribosomal protein L11 methyltransferase (308 aa).

4 residues coordinate S-adenosyl-L-methionine: threonine 160, glycine 181, aspartate 203, and asparagine 245.

It belongs to the methyltransferase superfamily. PrmA family.

The protein localises to the cytoplasm. It catalyses the reaction L-lysyl-[protein] + 3 S-adenosyl-L-methionine = N(6),N(6),N(6)-trimethyl-L-lysyl-[protein] + 3 S-adenosyl-L-homocysteine + 3 H(+). Functionally, methylates ribosomal protein L11. This Thermoanaerobacter sp. (strain X514) protein is Ribosomal protein L11 methyltransferase.